The following is a 490-amino-acid chain: Cobyric acid synthase (490 aa).

In terms of domain architecture, GATase cobBQ-type spans 252–439 (RLKVVVPVLP…LHGLFESTAA (188 aa)). Cys-333 serves as the catalytic Nucleophile. His-431 is a catalytic residue.

This sequence belongs to the CobB/CobQ family. CobQ subfamily.

The protein operates within cofactor biosynthesis; adenosylcobalamin biosynthesis. Catalyzes amidations at positions B, D, E, and G on adenosylcobyrinic A,C-diamide. NH(2) groups are provided by glutamine, and one molecule of ATP is hydrogenolyzed for each amidation. The protein is Cobyric acid synthase of Pseudomonas aeruginosa (strain ATCC 15692 / DSM 22644 / CIP 104116 / JCM 14847 / LMG 12228 / 1C / PRS 101 / PAO1).